The primary structure comprises 167 residues: Peptide deformylase (167 aa).

Fe cation is bound by residues Cys-90 and His-132. Residue Glu-133 is part of the active site. Position 136 (His-136) interacts with Fe cation.

Belongs to the polypeptide deformylase family. Fe(2+) is required as a cofactor.

The catalysed reaction is N-terminal N-formyl-L-methionyl-[peptide] + H2O = N-terminal L-methionyl-[peptide] + formate. Its function is as follows. Removes the formyl group from the N-terminal Met of newly synthesized proteins. Requires at least a dipeptide for an efficient rate of reaction. N-terminal L-methionine is a prerequisite for activity but the enzyme has broad specificity at other positions. The protein is Peptide deformylase of Dehalococcoides mccartyi (strain CBDB1).